A 359-amino-acid polypeptide reads, in one-letter code: 4-hydroxyproline 2-epimerase (359 aa).

The Proton acceptor role is filled by C126. Substrate is bound by residues G127 to H128, H248, and D274. C278 serves as the catalytic Proton donor. G279–T280 lines the substrate pocket.

Belongs to the proline racemase family.

The catalysed reaction is trans-4-hydroxy-L-proline = cis-4-hydroxy-D-proline. Functionally, catalyzes the epimerization of trans-4-hydroxy-L-proline (t4LHyp) to cis-4-hydroxy-D-proline (c4DHyp). Is likely involved in a degradation pathway that converts t4LHyp to alpha-ketoglutarate. Displays no proline racemase activity. The polypeptide is 4-hydroxyproline 2-epimerase (Planctopirus limnophila (strain ATCC 43296 / DSM 3776 / IFAM 1008 / Mu 290) (Planctomyces limnophilus)).